The chain runs to 1101 residues: ATP-dependent DNA helicase mph1 (1101 aa).

Disordered stretches follow at residues 22 to 59 (PGTSDTVESVQTNNRPAKQSDISISQGNEEDEFQSPDR), 95 to 138 (LTQP…QYHD), 154 to 231 (FEEE…TNRP), and 250 to 270 (SSQRGEQIFSPPEKSEPPTHH). A compositionally biased stretch (polar residues) spans 24–48 (TSDTVESVQTNNRPAKQSDISISQG). Low complexity predominate over residues 170-190 (TPARTAAAPCAAPKGTAADVP). Residues 191–202 (FDLDDIPDDAFD) show a composition bias toward acidic residues. A compositionally biased stretch (polar residues) spans 209-228 (PPRSTSQATRGPPVQSQFRT). Positions 296–464 (IAQRGLFHNL…AIIDDLGIAK (169 aa)) constitute a Helicase ATP-binding domain. 309-316 (LPTGLGKT) contacts ATP. The DEAH box signature appears at 412–415 (DEAH). Positions 634–808 (YLKQVVLNHF…GTRFTFHDDK (175 aa)) constitute a Helicase C-terminal domain. 2 disordered regions span residues 824–890 (RQID…PTPE) and 991–1067 (SRDP…QDAF). Over residues 842–854 (RRARPPKRPPKKF) the composition is skewed to basic residues.

This sequence belongs to the DEAD box helicase family. DEAH subfamily. FANCM sub-subfamily. Interacts with the MHF histone-fold complex to form the FANCM-MHF complex.

It localises to the nucleus. The catalysed reaction is ATP + H2O = ADP + phosphate + H(+). In terms of biological role, ATP-dependent DNA helicase involved in DNA damage repair by homologous recombination and in genome maintenance. Capable of unwinding D-loops. Plays a role in limiting crossover recombinants during mitotic DNA double-strand break (DSB) repair. Component of a FANCM-MHF complex which promotes gene conversion at blocked replication forks, probably by reversal of the stalled fork. In Aspergillus fumigatus (strain CBS 144.89 / FGSC A1163 / CEA10) (Neosartorya fumigata), this protein is ATP-dependent DNA helicase mph1.